Reading from the N-terminus, the 133-residue chain is Fatty acid-binding protein, heart (133 aa).

The residue at position 2 (A2) is an N-acetylalanine. A Phosphothreonine modification is found at T8. Y20 is subject to Phosphotyrosine; by Tyr-kinases. S23 is modified (phosphoserine). Phosphothreonine is present on T30. S83 carries the phosphoserine modification. (9Z)-octadecenoate is bound at residue R127–Y129. R127 to Y129 provides a ligand contact to hexadecanoate. R127–Y129 contributes to the octadecanoate binding site.

It belongs to the calycin superfamily. Fatty-acid binding protein (FABP) family.

It localises to the cytoplasm. FABPs are thought to play a role in the intracellular transport of long-chain fatty acids and their acyl-CoA esters. This is Fatty acid-binding protein, heart (Fabp3) from Mus musculus (Mouse).